Reading from the N-terminus, the 227-residue chain is MNRNVVLKLTGVERHYGQGDTLLTILKGADFSLAKGEIVALVAPSGTGKSTLLHVAGLLEHPDGGEVTINGHACDGLSDEKRTAIRRREIGFVYQFHHLLPEFSALENIMMPQLIAGLSWKEAQERAGQLLDYMRIGHRGSHRPAELSGGEQQRVAIARAVANAPTLLLADEPTGNLDPETASYVFDALEALVRQSGLAALIATHNHELAGRMDRRVTISDGKVVEF.

One can recognise an ABC transporter domain in the interval 7–227 (LKLTGVERHY…TISDGKVVEF (221 aa)). Position 43 to 50 (43 to 50 (APSGTGKS)) interacts with ATP.

This sequence belongs to the ABC transporter superfamily. Lipoprotein translocase (TC 3.A.1.125) family. In terms of assembly, the complex is composed of two ATP-binding proteins (LolD) and two transmembrane proteins (LolC and LolE).

Its subcellular location is the cell inner membrane. Functionally, part of the ABC transporter complex LolCDE involved in the translocation of mature outer membrane-directed lipoproteins, from the inner membrane to the periplasmic chaperone, LolA. Responsible for the formation of the LolA-lipoprotein complex in an ATP-dependent manner. The protein is Lipoprotein-releasing system ATP-binding protein LolD of Rhizobium etli (strain ATCC 51251 / DSM 11541 / JCM 21823 / NBRC 15573 / CFN 42).